Here is a 598-residue protein sequence, read N- to C-terminus: Nicotinamide riboside transporter 1 (598 aa).

11 consecutive transmembrane segments (helical) span residues 48–68 (LAYWGAVSFTAGTWMSGSAAL), 71–91 (GLSYPETIVSFLLGNVLTIIF), 112–132 (FVFGIYGSAFGIIIRILMSIV), 174–194 (LVGFIIFHVLTALCYFMKPYH), 197–217 (YLLIWSCVATCFAMLGIVIYL), 241–261 (AWAWVYMISYWFGSISPGSTN), 273–293 (LAIWTGSVCALLIPATLVPIF), 372–392 (GALFCACISWACLPWNFYNSS), 395–415 (FLTVMSSFGVVMTPIIAVMIC), 447–467 (AIVAWVCGMAPGLPGIAWEVN), and 484–504 (SFFSFLISFFVYWGLCVFFPF). S560 and S572 each carry phosphoserine.

Belongs to the purine-cytosine permease (2.A.39) family.

The protein localises to the cell membrane. High-affinity pH-dependent nicotinamide riboside transporter which also transports thiamine with low affinity. Involved in 5-fluorocytosine sensitivity. The chain is Nicotinamide riboside transporter 1 (NRT1) from Saccharomyces cerevisiae (strain ATCC 204508 / S288c) (Baker's yeast).